The primary structure comprises 186 residues: Dirigent protein 7 (186 aa).

An N-terminal signal peptide occupies residues 1–21 (MAKLILIIVTQILLIAAVVSA). Asn70, Asn91, and Asn126 each carry an N-linked (GlcNAc...) asparagine glycan.

This sequence belongs to the plant dirigent protein family. As to quaternary structure, homodimer.

Its subcellular location is the secreted. The protein resides in the extracellular space. It localises to the apoplast. Dirigent proteins impart stereoselectivity on the phenoxy radical-coupling reaction, yielding optically active lignans from two molecules of coniferyl alcohol in the biosynthesis of lignans, flavonolignans, and alkaloids and thus plays a central role in plant secondary metabolism. The polypeptide is Dirigent protein 7 (DIR7) (Arabidopsis thaliana (Mouse-ear cress)).